We begin with the raw amino-acid sequence, 564 residues long: Oxalyl-CoA decarboxylase (564 aa).

Substrate-binding residues include isoleucine 32 and tyrosine 118. ADP contacts are provided by arginine 158 and lysine 220. 261–265 serves as a coordination point for substrate; that stretch reads AAARS. Arginine 280, aspartate 302, and isoleucine 322 together coordinate ADP. Asparagine 355 is a binding site for substrate. Thiamine diphosphate-binding positions include tyrosine 372 and 396 to 398; that span reads ANT. 403–404 is a binding site for substrate; sequence RN. 421-423 is a binding site for thiamine diphosphate; that stretch reads GVM. Aspartate 447 is a binding site for Mg(2+). 448–449 provides a ligand contact to thiamine diphosphate; sequence SA. Positions 474 and 476 each coordinate Mg(2+). Tyrosine 478 contributes to the thiamine diphosphate binding site. 550–552 contributes to the substrate binding site; it reads SGH.

The protein belongs to the TPP enzyme family. As to quaternary structure, homotetramer; dimer of dimers. Requires Mg(2+) as cofactor. Thiamine diphosphate is required as a cofactor.

The catalysed reaction is oxalyl-CoA + H(+) = formyl-CoA + CO2. It functions in the pathway metabolic intermediate degradation; oxalate degradation; CO(2) and formate from oxalate: step 2/2. Functionally, involved in the catabolism of oxalate and in the adapatation to low pH via the induction of the oxalate-dependent acid tolerance response (ATR). Catalyzes the decarboxylation of oxalyl-CoA to yield carbon dioxide and formyl-CoA. This Escherichia coli O157:H7 protein is Oxalyl-CoA decarboxylase (oxc).